We begin with the raw amino-acid sequence, 153 residues long: Transcriptional repressor NrdR (153 aa).

A zinc finger lies at cysteine 3 to cysteine 34. Residues leucine 49–aspartate 139 form the ATP-cone domain.

This sequence belongs to the NrdR family. It depends on Zn(2+) as a cofactor.

Its function is as follows. Negatively regulates transcription of bacterial ribonucleotide reductase nrd genes and operons by binding to NrdR-boxes. In Ehrlichia ruminantium (strain Gardel), this protein is Transcriptional repressor NrdR.